The chain runs to 173 residues: N-alpha-acetyltransferase 20 (173 aa).

An N-acetyltransferase domain is found at 2 to 151; the sequence is TTIRRFVCDD…DALDMRKALP (150 aa).

Belongs to the acetyltransferase family. ARD1 subfamily.

In terms of biological role, seems to be involved in N-acetylation. The protein is N-alpha-acetyltransferase 20 (nat5) of Dictyostelium discoideum (Social amoeba).